Consider the following 848-residue polypeptide: Beta-galactosidase 11 (848 aa).

A signal peptide spans Met-1–Gly-23. Asn-29 carries an N-linked (GlcNAc...) asparagine glycan. Glu-189 acts as the Proton donor in catalysis. Glu-260 serves as the catalytic Nucleophile. Asn-261, Asn-472, and Asn-783 each carry an N-linked (GlcNAc...) asparagine glycan. The 88-residue stretch at Gly-750–Ser-837 folds into the SUEL-type lectin domain.

It belongs to the glycosyl hydrolase 35 family.

The protein resides in the secreted. The protein localises to the extracellular space. Its subcellular location is the apoplast. It catalyses the reaction Hydrolysis of terminal non-reducing beta-D-galactose residues in beta-D-galactosides.. The sequence is that of Beta-galactosidase 11 from Oryza sativa subsp. japonica (Rice).